The following is a 974-amino-acid chain: Kinase-interacting protein 1 (974 aa).

Positions 10 to 90 constitute an NAB domain; sequence YSWWAASHIR…ERYDHLSKEL (81 aa). The tract at residues 151 to 170 is disordered; that stretch reads STASKQKQGKQSSKIEDAAK. The stretch at 173-423 forms a coiled coil; it reads LSKNEAIEEI…DVVNQNSCLR (251 aa). A disordered region spans residues 586–614; the sequence is AQPTPAEKGDEKVSAQSGNTSVYETHTQK. Residues 599-610 are compositionally biased toward polar residues; the sequence is SAQSGNTSVYET. Residues 641-697 are a coiled coil; the sequence is NEYTAILKNYKEVTKKLSDIEKKDRDTEFELTLQTRELKSAIAKRDEEIHNLRQKLS. The interval 714-740 is disordered; sequence LLDPSDPSSARGLKPEDLPQIKDGDDE. Basic and acidic residues predominate over residues 726–736; it reads LKPEDLPQIKD. Coiled coils occupy residues 784-807 and 882-905; these read HQIQ…RDKE and AAKF…ELEA.

Homodimer or homooligomer. Interacts with PRK1. In terms of processing, phosphorylated by PRK1. As to expression, expressed in mature pollen grains and pollen tubes, but not in style, ovary, petal, leaf, root or sepal.

It is found in the cytoplasm. Its function is as follows. Probably involved in the receptor-like kinase-mediated signal transduction pathway. The sequence is that of Kinase-interacting protein 1 from Petunia integrifolia (Violet-flowered petunia).